The chain runs to 506 residues: Sugar transport protein 5 (506 aa).

At 1-19 the chain is on the cytoplasmic side; the sequence is MAGGGLALDVSSAGNIDAK. The next 12 helical transmembrane spans lie at 20–40, 81–101, 117–137, 141–161, 168–188, 201–221, 287–307, 325–345, 352–372, 390–410, 430–450, and 456–476; these read ITAAVVMSCIVAASCGLIFGY, LLTAFTSSLYVAGLVASLVAS, GFTFLFGALINGLAANIAMLI, ILLGFGVGFTNQAAPVYLSEV, GAFNIGFSCFISMGVVAANLI, ISLGLAAVPAAIMTVGCLFIS, LVVAVVIPCFQQLTGITVNAF, IATFILGFVNLGSLLLSTMVI, FLFIAGGILMLLCQIAVAVLL, VTVVVLLCIYAAGFGWSWGPL, LSVAVNFAATFALSQTFLATL, and GAFLFYGGWIFTMTIFVIMFL. Over 477-506 the chain is Cytoplasmic; it reads PETKGIPVDSMYQVWEKHWYWQRFTKPTST.

It belongs to the major facilitator superfamily. Sugar transporter (TC 2.A.1.1) family.

It is found in the membrane. Mediates an active uptake of hexoses, probably by sugar/hydrogen symport. In Arabidopsis thaliana (Mouse-ear cress), this protein is Sugar transport protein 5 (STP5).